We begin with the raw amino-acid sequence, 1404 residues long: Probable GPI-anchored adhesin-like protein PGA55 (1404 aa).

The N-terminal stretch at 1–19 is a signal peptide; that stretch reads MVLLCKYKVSWVFVLSVAG. Tandem repeats lie at residues 104–109, 136–141, 156–161, 162–167, 183–188, 196–201, 203–208, 209–214, 216–221, 222–227, 228–233, 234–239, 247–252, 253–258, 261–266, 267–272, 274–279, 280–285, 286–291, 292–297, 298–303, 304–309, 317–322, 324–329, 330–335, 336–341, 343–348, 349–354, 355–360, 361–366, 374–379, 380–385, 388–393, 394–399, 401–406, 407–412, 413–418, 419–424, 425–430, 431–436, 444–449, 450–455, 457–462, 463–468, 469–474, 475–480, 488–493, 494–500, 502–507, 508–513, 515–520, 521–526, 527–532, 533–538, 546–551, 552–557, 560–565, 566–571, 573–578, 579–584, 585–590, 591–596, 604–609, 611–616, 617–622, 623–628, 629–634, 635–640, 641–646, 654–659, 660–665, 668–673, 674–679, 681–686, 687–692, 693–698, 699–704, 712–717, 719–724, 725–730, 731–736, 737–742, 743–748, 749–754, 771–776, 777–782, and 797–802. Positions 104 to 541 are 88 X 6 AA approximate tandem repeats; it reads VSSSSSEVIS…EVSSSSQVTS (438 aa). A disordered region spans residues 113 to 833; that stretch reads SSSSEEASSS…VSSSSASSEV (721 aa). A glycan (N-linked (GlcNAc...) asparagine) is linked at N817. The 1-88 repeat unit spans residues 824–829; that stretch reads VSSSSA. N-linked (GlcNAc...) asparagine glycosylation is found at N994 and N1074. N1382 is lipidated: GPI-anchor amidated asparagine. Residues 1383 to 1404 constitute a propeptide, removed in mature form; it reads AASRQSFNYKFIVGLILAYIIA.

Its subcellular location is the cell membrane. Functionally, predicted GPI-anchored adhesin-like protein which may be involved in filamentous growth and chlamydospore formation. The sequence is that of Probable GPI-anchored adhesin-like protein PGA55 (PGA55) from Candida albicans (strain SC5314 / ATCC MYA-2876) (Yeast).